Consider the following 145-residue polypeptide: Basic phospholipase A2 beta-bungarotoxin A2 chain (145 aa).

The first 17 residues, 1-17, serve as a signal peptide directing secretion; that stretch reads MLIFLWCGAVCVSLLGA. The propeptide occupies 18-25; sequence ANIPPHPL. 6 disulfide bridges follow: Cys52-Cys144, Cys54-Cys70, Cys69-Cys125, Cys76-Cys118, Cys86-Cys111, and Cys104-Cys116. Ca(2+)-binding residues include Tyr53, Gly55, and Gly57. His73 is a catalytic residue. Ca(2+) is bound at residue Asp74. Residue Asp119 is part of the active site.

Belongs to the phospholipase A2 family. Group I subfamily. D49 sub-subfamily. In terms of assembly, heterodimer; disulfide-linked. The A chains have phospholipase A2 activity and the B chains show homology with the basic protease inhibitors. The A2 chain is found in beta-3 and beta-4 bungarotoxins. It depends on Ca(2+) as a cofactor. Expressed by the venom gland.

The protein resides in the secreted. The enzyme catalyses a 1,2-diacyl-sn-glycero-3-phosphocholine + H2O = a 1-acyl-sn-glycero-3-phosphocholine + a fatty acid + H(+). Snake venom phospholipase A2 (PLA2) that inhibits neuromuscular transmission by blocking acetylcholine release from the nerve termini. PLA2 catalyzes the calcium-dependent hydrolysis of the 2-acyl groups in 3-sn-phosphoglycerides. The protein is Basic phospholipase A2 beta-bungarotoxin A2 chain of Bungarus multicinctus (Many-banded krait).